A 485-amino-acid chain; its full sequence is Elongation factor TuB, chloroplastic (485 aa).

The N-terminal 76 residues, 1–76 (MASISAASAT…TTHPRRFTVR (76 aa)), are a transit peptide targeting the chloroplast. The 205-residue stretch at 86–290 (KPHVNIGTIG…NVDEYIPIPQ (205 aa)) folds into the tr-type G domain. A G1 region spans residues 95–102 (GHVDHGKT). 95–102 (GHVDHGKT) provides a ligand contact to GTP. Positions 136 to 140 (GITIN) are G2. Residues 157 to 160 (DCPG) form a G3 region. Residues 157–161 (DCPGH) and 212–215 (NKQD) contribute to the GTP site. Positions 212-215 (NKQD) are G4. Positions 250–252 (SAL) are G5.

This sequence belongs to the TRAFAC class translation factor GTPase superfamily. Classic translation factor GTPase family. EF-Tu/EF-1A subfamily.

Its subcellular location is the plastid. It is found in the chloroplast. Functionally, this protein promotes the GTP-dependent binding of aminoacyl-tRNA to the A-site of ribosomes during protein biosynthesis. In Nicotiana sylvestris (Wood tobacco), this protein is Elongation factor TuB, chloroplastic (TUFB).